The sequence spans 461 residues: Chromosomal replication initiator protein DnaA (461 aa).

The domain I, interacts with DnaA modulators stretch occupies residues 1-90 (MAVSLWQQCI…RPSARPVAPA (90 aa)). A domain II region spans residues 91 to 124 (PVAAKPVNRQTKAQVGTTSFNTQAEPIINPNHRS). The segment at 125–341 (NINPTYQFDN…GALNRVIANA (217 aa)) is domain III, AAA+ region. ATP-binding residues include G169, G171, K172, and T173. The segment at 342-461 (NFTGRPITID…YANLIRTLSS (120 aa)) is domain IV, binds dsDNA.

The protein belongs to the DnaA family. Oligomerizes as a right-handed, spiral filament on DNA at oriC.

It localises to the cytoplasm. Functionally, plays an essential role in the initiation and regulation of chromosomal replication. ATP-DnaA binds to the origin of replication (oriC) to initiate formation of the DNA replication initiation complex once per cell cycle. Binds the DnaA box (a 9 base pair repeat at the origin) and separates the double-stranded (ds)DNA. Forms a right-handed helical filament on oriC DNA; dsDNA binds to the exterior of the filament while single-stranded (ss)DNA is stabiized in the filament's interior. The ATP-DnaA-oriC complex binds and stabilizes one strand of the AT-rich DNA unwinding element (DUE), permitting loading of DNA polymerase. After initiation quickly degrades to an ADP-DnaA complex that is not apt for DNA replication. Binds acidic phospholipids. The protein is Chromosomal replication initiator protein DnaA of Shewanella frigidimarina (strain NCIMB 400).